Here is a 479-residue protein sequence, read N- to C-terminus: Fibrinogen beta chain (479 aa).

Residues 1–18 (MRHLWLLLLSVSLVQTQA) form the signal peptide. Positions 20–82 (TTDSDKVDLS…VERKPPDAGG (63 aa)) are disordered. The interval 33–35 (GHR) is beta-chain polymerization, binding distal domain of another fibrin. Composition is skewed to basic and acidic residues over residues 35–45 (RPVDRRKEEPP) and 64–78 (AKVD…RKPP). Disulfide bonds link Cys-219–Cys-304 and Cys-229–Cys-258. The Fibrinogen C-terminal domain occupies 220 to 476 (NIPVVSGKEC…RMSMKIRPVF (257 aa)). Asn-382 is a glycosylation site (N-linked (GlcNAc...) asparagine). Cys-412 and Cys-425 are disulfide-bonded.

As to quaternary structure, heterohexamer; disulfide linked. Contains 2 sets of 3 non-identical chains (alpha, beta and gamma). The 2 heterotrimers are in head to head conformation with the N-termini in a small central domain. Post-translationally, conversion of fibrinogen to fibrin is triggered by thrombin, which cleaves fibrinopeptides A and B from alpha and beta chains, and thus exposes the N-terminal polymerization sites responsible for the formation of the soft clot.

It localises to the secreted. Functionally, cleaved by the protease thrombin to yield monomers which, together with fibrinogen alpha (FGA) and fibrinogen gamma (FGG), polymerize to form an insoluble fibrin matrix. Fibrin has a major function in hemostasis as one of the primary components of blood clots. In addition, functions during the early stages of wound repair to stabilize the lesion and guide cell migration during re-epithelialization. Was originally thought to be essential for platelet aggregation, based on in vitro studies using anticoagulated blood. However subsequent studies have shown that it is not absolutely required for thrombus formation in vivo. Enhances expression of SELP in activated platelets. Maternal fibrinogen is essential for successful pregnancy. Fibrin deposition is also associated with infection, where it protects against IFNG-mediated hemorrhage. May also facilitate the antibacterial immune response via both innate and T-cell mediated pathways. This is Fibrinogen beta chain (Fgb) from Rattus norvegicus (Rat).